A 121-amino-acid chain; its full sequence is Small ribosomal subunit protein uS13 (121 aa).

A disordered region spans residues 91–121; that stretch reads HRRGLPVRGQNTKNNARTRKGPSKTVAGKKK. Residues 106–121 show a composition bias toward basic residues; it reads ARTRKGPSKTVAGKKK.

Belongs to the universal ribosomal protein uS13 family. In terms of assembly, part of the 30S ribosomal subunit. Forms a loose heterodimer with protein S19. Forms two bridges to the 50S subunit in the 70S ribosome.

Its function is as follows. Located at the top of the head of the 30S subunit, it contacts several helices of the 16S rRNA. In the 70S ribosome it contacts the 23S rRNA (bridge B1a) and protein L5 of the 50S subunit (bridge B1b), connecting the 2 subunits; these bridges are implicated in subunit movement. Contacts the tRNAs in the A and P-sites. The polypeptide is Small ribosomal subunit protein uS13 (Listeria welshimeri serovar 6b (strain ATCC 35897 / DSM 20650 / CCUG 15529 / CIP 8149 / NCTC 11857 / SLCC 5334 / V8)).